The chain runs to 139 residues: Large ribosomal subunit protein uL16 (139 aa).

Belongs to the universal ribosomal protein uL16 family. Part of the 50S ribosomal subunit.

Functionally, binds 23S rRNA and is also seen to make contacts with the A and possibly P site tRNAs. The polypeptide is Large ribosomal subunit protein uL16 (rplP) (Neorickettsia sennetsu (strain ATCC VR-367 / Miyayama) (Ehrlichia sennetsu)).